Reading from the N-terminus, the 212-residue chain is Prolactin (212 aa).

An N-terminal signal peptide occupies residues 1-24; it reads MAQRKTNGSKLFMMVLYMVAACSA. 2 disulfide bridges follow: C70/C185 and C202/C212.

It belongs to the somatotropin/prolactin family. As to expression, pituitary gland.

The protein localises to the secreted. The protein is Prolactin (prl) of Dicentrarchus labrax (European seabass).